We begin with the raw amino-acid sequence, 237 residues long: tRNA (guanine-N(1)-)-methyltransferase (237 aa).

S-adenosyl-L-methionine is bound by residues Gly113 and 133–138; that span reads VGDFIV.

The protein belongs to the RNA methyltransferase TrmD family. Homodimer.

Its subcellular location is the cytoplasm. It catalyses the reaction guanosine(37) in tRNA + S-adenosyl-L-methionine = N(1)-methylguanosine(37) in tRNA + S-adenosyl-L-homocysteine + H(+). Functionally, specifically methylates guanosine-37 in various tRNAs. The protein is tRNA (guanine-N(1)-)-methyltransferase of Hydrogenovibrio crunogenus (strain DSM 25203 / XCL-2) (Thiomicrospira crunogena).